Here is a 903-residue protein sequence, read N- to C-terminus: Protein translocase subunit SecA (903 aa).

ATP is bound by residues Gln89, 107 to 111 (GEGKT), and Asp502. Cys886, Cys888, Cys897, and His898 together coordinate Zn(2+).

This sequence belongs to the SecA family. Monomer and homodimer. Part of the essential Sec protein translocation apparatus which comprises SecA, SecYEG and auxiliary proteins SecDF-YajC and YidC. It depends on Zn(2+) as a cofactor.

It is found in the cell inner membrane. It localises to the cytoplasm. It catalyses the reaction ATP + H2O + cellular proteinSide 1 = ADP + phosphate + cellular proteinSide 2.. Functionally, part of the Sec protein translocase complex. Interacts with the SecYEG preprotein conducting channel. Has a central role in coupling the hydrolysis of ATP to the transfer of proteins into and across the cell membrane, serving both as a receptor for the preprotein-SecB complex and as an ATP-driven molecular motor driving the stepwise translocation of polypeptide chains across the membrane. This chain is Protein translocase subunit SecA, found in Rhizobium meliloti (strain 1021) (Ensifer meliloti).